The chain runs to 668 residues: Potassium voltage-gated channel subfamily KQT member 1 (668 aa).

Residues 1-119 (MDTASSPPSA…YNFLERPTGW (119 aa)) lie on the Cytoplasmic side of the membrane. S27 is subject to Phosphoserine; by PKA. Residues 120-141 (KCFVYHFTVFLIVLVCLIFSVL) traverse the membrane as a helical segment. Over 142–152 (STIEQYAALAT) the chain is Extracellular. The helical transmembrane segment at 153–175 (GTLFWMEIVLVVFFGTEYVVRLW) threads the bilayer. The Cytoplasmic portion of the chain corresponds to 176-191 (SAGCRSKYVGIWGRLR). Residues 192 to 217 (FARKPISIIDLIVVVASMVVLCVGSK) form a helical membrane-spanning segment. Topologically, residues 218–225 (GQVFATSA) are extracellular. The helical; Voltage-sensor transmembrane segment at 226–241 (IRGIRFLQILRMLHVD) threads the bilayer. The segment at 237–245 (MLHVDRQGG) is interaction with KCNE3. The Cytoplasmic segment spans residues 242 to 259 (RQGGTWRLLGSVVFIHRQ). Residue Q243 coordinates a 1,2-diacyl-sn-glycero-3-phospho-(1D-myo-inositol-4,5-bisphosphate). The helical transmembrane segment at 260 to 282 (ELITTLYIGFLGLIFSSYFVYLA) threads the bilayer. At 283–298 (EKDAVNESGRIEFGSY) the chain is on the extracellular side. N288 carries N-linked (GlcNAc...) asparagine glycosylation. An intramembrane region (pore-forming) is located at residues 299 to 319 (ADALWWGVVTVTTIGYGDKVP). Residues 320-321 (QT) lie on the Extracellular side of the membrane. The helical transmembrane segment at 322 to 347 (WVGKTIASCFSVFAISFFALPAGILG) threads the bilayer. Topologically, residues 348–668 (SGFALKVQQK…VPQTGPDEGS (321 aa)) are cytoplasmic. Residues 369–381 (AAASLIQTAWRCY) form an interaction with CALM region. Residues S406 and S408 each carry the phosphoserine modification. The interaction with CALM; calcium-dependent stretch occupies residues 514-528 (KVIRRMQYFVAKKKF). The interaction with KCNE1 C-terminus stretch occupies residues 534–571 (PYDVRDVIEQYSQGHLNLMVRIKELQRRLDQSIGKPSL). A coiled-coil region spans residues 584–620 (SNTIGARLNRVEDKVTQLDQRLVIITDMLHQLLSMQQ). The interaction with AKAP9 stretch occupies residues 587–615 (IGARLNRVEDKVTQLDQRLVIITDMLHQL). The C-terminal assembly domain (tetramerization) stretch occupies residues 588 to 619 (GARLNRVEDKVTQLDQRLVIITDMLHQLLSMQ).

The protein belongs to the potassium channel family. KQT (TC 1.A.1.15) subfamily. Kv7.1/KCNQ1 sub-subfamily. In terms of assembly, tetramer. Heterotetramer with KCNE1; form the native cardiac channel I(Ks) which increases the amplitude and slows down the activation kinetics of outward potassium current and targets to the membrane raft. Interacts (via C-terminus) with CALM; forms a heterooctameric structure (with 4:4 KCNQ1:CALM stoichiometry) in a calcium-independent manner. Interacts with AKAP9; targets protein kinase A (PKA) catalytic and regulatory subunits and protein phosphatase 1 (PP1) to the KCNQ1-KCNE1 complex, allowing PKA-mediated phosphorylation and increase of delayed rectifier potassium channel activity. Interacts with KCNE2; form an heterooligomer complex that targets to the membrane raft and leading to currents with an apparently instantaneous activation, a rapid deactivation process and a linear current-voltage relationship and decreases the amplitude of the outward current. Interacts with AP2M1; mediates estrogen-induced internalization via clathrin-coated vesicles. Interacts with NEDD4L; promotes internalization and decreases I(Ks) currents. Interacts with USP2; counteracts the NEDD4L-specific down-regulation of I(Ks) and restore plasma membrane localization. Heterotetramer with KCNQ5; has a voltage-gated potassium channel activity. Interacts with KCNE3; four KCNE3 molecules are bound to one KCNQ1 tetramer (4:4 KCNQ1:KCNE3 stoichiometry); alters membrane raft localization; affects KCNQ1 structure and gating properties. Interacts with KCNE4; impairs KCNQ1 localization in lipid rafts and inhibits voltage-gated potassium channel activity. Interacts with KCNE5; impairs KCNQ1 localization in lipid rafts and only conducts current upon strong and continued depolarization. Interacts with SLC5A3; forms coregulatory channel-transporter complexes that modulate Na(+)-coupled myo-inositol influx through the transporter. Phosphorylation at Ser-27 by PKA; increases delayed rectifier potassium channel activity of the KCNQ1-KCNE1 complex through a macromolecular complex that includes PKA, PP1, and the targeting protein AKAP9. In terms of processing, ubiquitinated by NEDD4L; promotes internalization. The ubiquitinylated form is internalized through a clathrin-mediated endocytosis by interacting with AP2M1 and is recycled back to the cell membrane via RAB4A and RAB11A. Post-translationally, deubiquitinated by USP2; counteracts the NEDD4L-specific down-regulation of I(Ks) and restores the membrane localization. In terms of tissue distribution, expressed in heart, kidney and salivary glands. Detected in the cochlea. Almost undetectable in brain, skeletal muscle and liver. Widely expressed in embryonic and neonatal tissues. Expressed in choroid plexus epithelium (at protein level).

It localises to the cell membrane. Its subcellular location is the cytoplasmic vesicle membrane. The protein resides in the early endosome. The protein localises to the membrane raft. It is found in the endoplasmic reticulum. It localises to the basolateral cell membrane. Its subcellular location is the apical cell membrane. The enzyme catalyses K(+)(in) = K(+)(out). Its activity is regulated as follows. PIP2 molecule is essential to activate KCNQ channels by inducing the coupling of the voltage-sensing domain (VSD) and the pore-forming domain (PD). Upon channel activation, PIP2 disrupts the VSD-calmodulin/CALM interactions, causing the release of CALM from the VSD which triggers the opening of the gate. Calcium potentiates KCNQ1 channel current through calcium-bound CALM. Calcium-bound CALM competes with PIP2 to stabilize the channel open state. Functionally, pore-forming subunit of the voltage-gated potassium (Kv) channel involved in the regulation of cardiomyocyte excitability and important in normal development and functions of myocardium, inner ear, stomach and colon. Associates with KCNE beta subunits that modulates current kinetics. Induces a voltage-dependent by rapidly activating and slowly deactivating potassium-selective outward current. Also promotes a delayed voltage activated potassium current showing outward rectification characteristic. During beta-adrenergic receptor stimulation participates in cardiac increases the amplitude and slows down the activation kinetics of outward potassium current I(Ks). Muscarinic agonist oxotremorine-M strongly suppresses KCNQ1/KCNE1 current. When associated with KCNE3, forms the potassium channel that is important for cyclic AMP-stimulated intestinal secretion of chloride ions. This interaction with KCNE3 is reduced by 17beta-estradiol, resulting in the reduction of currents. During conditions of increased substrate load, maintains the driving force for proximal tubular and intestinal sodium ions absorption, gastric acid secretion, and cAMP-induced jejunal chloride ions secretion. Allows the provision of potassium ions to the luminal membrane of the secretory canaliculus in the resting state as well as during stimulated acid secretion. When associated with KCNE2, forms a heterooligomer complex leading to currents with an apparently instantaneous activation, a rapid deactivation process and a linear current-voltage relationship and decreases the amplitude of the outward current. When associated with KCNE4, inhibits voltage-gated potassium channel activity. When associated with KCNE5, this complex only conducts current upon strong and continued depolarization. Also forms a heterotetramer with KCNQ5; has a voltage-gated potassium channel activity. Binds with phosphatidylinositol 4,5-bisphosphate. KCNQ1-KCNE2 channel associates with Na(+)-coupled myo-inositol symporter in the apical membrane of choroid plexus epithelium and regulates the myo-inositol gradient between blood and cerebrospinal fluid with an impact on neuron excitability. The chain is Potassium voltage-gated channel subfamily KQT member 1 from Mus musculus (Mouse).